Consider the following 754-residue polypeptide: 5-methyltetrahydropteroyltriglutamate--homocysteine methyltransferase (754 aa).

5-methyltetrahydropteroyltri-L-glutamate-binding positions include 17–20 (RELK) and Lys117. L-homocysteine contacts are provided by residues 431 to 433 (IGS) and Glu484. L-methionine-binding positions include 431–433 (IGS) and Glu484. 5-methyltetrahydropteroyltri-L-glutamate contacts are provided by residues 515-516 (RC) and Trp561. Asp599 is a binding site for L-homocysteine. Asp599 serves as a coordination point for L-methionine. Position 605 (Glu605) interacts with 5-methyltetrahydropteroyltri-L-glutamate. Zn(2+)-binding residues include His641, Cys643, and Glu665. The active-site Proton donor is the His694. Cys726 provides a ligand contact to Zn(2+).

It belongs to the vitamin-B12 independent methionine synthase family. The cofactor is Zn(2+).

It carries out the reaction 5-methyltetrahydropteroyltri-L-glutamate + L-homocysteine = tetrahydropteroyltri-L-glutamate + L-methionine. The protein operates within amino-acid biosynthesis; L-methionine biosynthesis via de novo pathway; L-methionine from L-homocysteine (MetE route): step 1/1. Its function is as follows. Catalyzes the transfer of a methyl group from 5-methyltetrahydrofolate to homocysteine resulting in methionine formation. The protein is 5-methyltetrahydropteroyltriglutamate--homocysteine methyltransferase of Salmonella typhimurium (strain LT2 / SGSC1412 / ATCC 700720).